The sequence spans 181 residues: Protein Syd (181 aa).

Belongs to the Syd family.

It localises to the cell inner membrane. In terms of biological role, interacts with the SecY protein in vivo. May bind preferentially to an uncomplexed state of SecY, thus functioning either as a chelating agent for excess SecY in the cell or as a regulatory factor that negatively controls the translocase function. The protein is Protein Syd of Enterobacter sp. (strain 638).